The primary structure comprises 274 residues: Acyl-[acyl-carrier-protein]--UDP-N-acetylglucosamine O-acyltransferase (274 aa).

The protein belongs to the transferase hexapeptide repeat family. LpxA subfamily. In terms of assembly, homotrimer.

It is found in the cytoplasm. It carries out the reaction a (3R)-hydroxyacyl-[ACP] + UDP-N-acetyl-alpha-D-glucosamine = a UDP-3-O-[(3R)-3-hydroxyacyl]-N-acetyl-alpha-D-glucosamine + holo-[ACP]. It functions in the pathway glycolipid biosynthesis; lipid IV(A) biosynthesis; lipid IV(A) from (3R)-3-hydroxytetradecanoyl-[acyl-carrier-protein] and UDP-N-acetyl-alpha-D-glucosamine: step 1/6. Functionally, involved in the biosynthesis of lipid A, a phosphorylated glycolipid that anchors the lipopolysaccharide to the outer membrane of the cell. The chain is Acyl-[acyl-carrier-protein]--UDP-N-acetylglucosamine O-acyltransferase from Bartonella quintana (strain Toulouse) (Rochalimaea quintana).